Consider the following 43-residue polypeptide: Bacteriocin leucocin-C (43 aa).

A disulfide bridge links Cys-9 with Cys-14.

The protein localises to the secreted. Inhibits a wide spectrum of lactic acid bacteria. The polypeptide is Bacteriocin leucocin-C (Leuconostoc mesenteroides).